A 274-amino-acid polypeptide reads, in one-letter code: MSDNEIVAGIMRDHIINLLKEGKRIDDRGFEDYRPIEIEVGVIEKAEGSALVKLGSTQVLVGIKTSLGEPFPDTPNMGVMTTNVELVPLASPTFEPGPPDERAIELARVIDRGIRESKALNLEKMVIVPGKIVRVVFIDVHVLDHDGNLMDAIGIAAIAALLNARVPKVRYNEETGEVETLDETEPLPVEKIPVPVTFAKIGNILVVDPSLDEELVMDGKITITTDETGHISAVQKSEGGAFKLEEVMYAVETAFKKAEEIRKLILEAVEKAKQ.

This sequence belongs to the RNase PH family. Rrp42 subfamily. In terms of assembly, component of the archaeal exosome complex. Forms a hexameric ring-like arrangement composed of 3 Rrp41-Rrp42 heterodimers. The hexameric ring associates with a trimer of Rrp4 and/or Csl4 subunits.

The protein localises to the cytoplasm. Its function is as follows. Non-catalytic component of the exosome, which is a complex involved in RNA degradation. Contributes to the structuring of the Rrp41 active site. The sequence is that of Exosome complex component Rrp42 from Pyrococcus abyssi (strain GE5 / Orsay).